Reading from the N-terminus, the 354-residue chain is N-acylethanolamine-hydrolyzing acid amidase (354 aa).

An N-terminal signal peptide occupies residues Met-1 to Pro-22. N-linked (GlcNAc...) asparagine glycosylation is found at Asn-35 and Asn-104. Residue Cys-123 is the Nucleophile of the active site. Asn-306, Asn-312, and Asn-352 each carry an N-linked (GlcNAc...) asparagine glycan.

This sequence belongs to the acid ceramidase family. Heterodimer of an alpha and a beta subunit, produced by autocatalytic cleavage. Post-translationally, N-glycosylated. Tunicamycin treatment causes a reduction in specific activity against N-palmitoylethanolamine. Autoproteolytic cleavage at pH 4.5 gives rise to the alpha and beta subunit. Cleavage gives rise to a conformation change that activates the enzyme. The same catalytic Cys residue mediates the autoproteolytic cleavage and subsequent hydrolysis of lipid substrates.

The protein resides in the lysosome. The protein localises to the membrane. The enzyme catalyses N-hexadecanoylethanolamine + H2O = ethanolamine + hexadecanoate. It carries out the reaction an N-(long-chain fatty acyl)ethanolamine + H2O = a long-chain fatty acid + ethanolamine. It catalyses the reaction N-dodecanoylethanolamine + H2O = dodecanoate + ethanolamine. The catalysed reaction is N-tetradecanoylethanolamine + H2O = tetradecanoate + ethanolamine. The enzyme catalyses an N-acylsphing-4-enine + H2O = sphing-4-enine + a fatty acid. It carries out the reaction N-hexadecanoylsphing-4-enine + H2O = sphing-4-enine + hexadecanoate. It catalyses the reaction N-dodecanoylsphing-4-enine + H2O = dodecanoate + sphing-4-enine. Its pathway is lipid metabolism; fatty acid metabolism. Functionally, degrades bioactive fatty acid amides to their corresponding acids, with the following preference: N-palmitoylethanolamine &gt; N-myristoylethanolamine &gt; N-stearoylethanolamine &gt; N-oleoylethanolamine &gt; N-linoleoylethanolamine &gt; N-arachidonoylethanolamine. In Cavia porcellus (Guinea pig), this protein is N-acylethanolamine-hydrolyzing acid amidase.